Here is an 87-residue protein sequence, read N- to C-terminus: MRSMAKKGLEEVLETLDRIIHDETVPRNVRRVASEIKEKLTTTDEVSLEAASAISVLEDISADPNLPMHVRTMIWNLTSQLERISVE.

Belongs to the UPF0147 family.

This is UPF0147 protein AF_2370.1 from Archaeoglobus fulgidus (strain ATCC 49558 / DSM 4304 / JCM 9628 / NBRC 100126 / VC-16).